We begin with the raw amino-acid sequence, 250 residues long: L-ascorbate peroxidase 1, cytosolic (250 aa).

His42 acts as the Proton acceptor in catalysis. The segment at 113-137 (VPFHPGREDKPAPPPEGRLPDATKG) is disordered. His163 contributes to the heme b binding site. K(+)-binding residues include Thr164, Thr180, Asn182, and Asp187.

It belongs to the peroxidase family. Ascorbate peroxidase subfamily. Heme b serves as cofactor. As to expression, expressed in roots, aerial vegetative parts and reproductive organs. Expressed in roots, leaves, stems and flowers.

It is found in the cytoplasm. It carries out the reaction L-ascorbate + H2O2 = L-dehydroascorbate + 2 H2O. Inhibited by p-chloromercuriphenylsulfonic acid (CMPSA). Plays a key role in hydrogen peroxide removal. The chain is L-ascorbate peroxidase 1, cytosolic from Oryza sativa subsp. japonica (Rice).